We begin with the raw amino-acid sequence, 130 residues long: Small ribosomal subunit protein uS9 (130 aa).

It belongs to the universal ribosomal protein uS9 family.

The protein is Small ribosomal subunit protein uS9 of Bacillus velezensis (strain DSM 23117 / BGSC 10A6 / LMG 26770 / FZB42) (Bacillus amyloliquefaciens subsp. plantarum).